Consider the following 3433-residue polypeptide: Genome polyprotein (3433 aa).

Residues serine 2 to asparagine 15 form an interaction with host EXOC1 region. Residues serine 2–arginine 105 are Cytoplasmic-facing. Residues leucine 37–valine 72 form a hydrophobic; homodimerization of capsid protein C region. A propeptide spans glycine 106–alanine 123 (ER anchor for the capsid protein C, removed in mature form by serine protease NS3). Residues glycine 106–leucine 126 form a helical membrane-spanning segment. Over serine 127–glutamate 248 the chain is Extracellular. A glycan (N-linked (GlcNAc...) asparagine; by host) is linked at asparagine 138. A helical transmembrane segment spans residues serine 249–glycine 269. Residues serine 270–methionine 273 are Cytoplasmic-facing. A helical membrane pass occupies residues glutamine 274 to serine 290. The Extracellular segment spans residues phenylalanine 291 to leucine 743. 4 disulfide bridges follow: cysteine 293-cysteine 320, cysteine 350-cysteine 406, cysteine 364-cysteine 395, and cysteine 382-cysteine 411. The interval aspartate 388–glycine 401 is fusion peptide. Asparagine 444 carries N-linked (GlcNAc...) asparagine; by host glycosylation. 2 disulfides stabilise this stretch: cysteine 480-cysteine 578 and cysteine 595-cysteine 626. The chain crosses the membrane as a helical span at residues phenylalanine 744–isoleucine 764. The Cytoplasmic portion of the chain corresponds to asparagine 765–serine 770. The helical transmembrane segment at isoleucine 771–alanine 791 threads the bilayer. Over aspartate 792 to aspartate 1216 the chain is Extracellular. 2 disulfides stabilise this stretch: cysteine 795–cysteine 806 and cysteine 846–cysteine 934. N-linked (GlcNAc...) asparagine; by host glycans are attached at residues asparagine 921, asparagine 966, and asparagine 998. 4 cysteine pairs are disulfide-bonded: cysteine 970–cysteine 1014, cysteine 1071–cysteine 1120, cysteine 1082–cysteine 1103, and cysteine 1104–cysteine 1107. Residues valine 1217–phenylalanine 1237 traverse the membrane as a helical segment. Residues leucine 1238 to asparagine 1247 lie on the Cytoplasmic side of the membrane. A helical membrane pass occupies residues isoleucine 1248 to leucine 1268. The Lumenal segment spans residues leucine 1269–alanine 1288. Residues isoleucine 1289–leucine 1309 form a helical membrane-spanning segment. Topologically, residues arginine 1310–valine 1316 are cytoplasmic. Residues tyrosine 1317 to serine 1335 form a helical membrane-spanning segment. The Lumenal segment spans residues alanine 1336 to leucine 1345. The helical transmembrane segment at leucine 1346 to valine 1366 threads the bilayer. Residues alanine 1367–glycine 1375 are Cytoplasmic-facing. Residues tryptophan 1376–alanine 1396 traverse the membrane as a helical segment. At glutamate 1397–aspartate 1399 the chain is on the lumenal side. A helical transmembrane segment spans residues isoleucine 1400–serine 1420. Topologically, residues glycine 1421 to alanine 1477 are cytoplasmic. The interval isoleucine 1428–alanine 1467 is interacts with and activates NS3 protease. Residues cysteine 1478–isoleucine 1498 constitute an intramembrane region (helical). At threonine 1499 to alanine 2174 the chain is on the cytoplasmic side. The Peptidase S7 domain occupies glycine 1506–glycine 1683. Catalysis depends on charge relay system; for serine protease NS3 activity residues histidine 1556, aspartate 1580, and serine 1640. One can recognise a Helicase ATP-binding domain in the interval proline 1686 to glutamine 1842. The important for RNA-binding stretch occupies residues arginine 1690 to glutamine 1693. Residue leucine 1699–threonine 1706 coordinates ATP. A DEAH box motif is present at residues aspartate 1790–histidine 1793. The Helicase C-terminal domain maps to glycine 1853 to glutamate 2018. Lysine 1894 carries the N6-acetyllysine; by host modification. The segment at glutamate 2169–aspartate 2173 is regulates the ATPase activity of NS3 helicase. Residues leucine 2175 to leucine 2195 traverse the membrane as a helical segment. The Lumenal segment spans residues methionine 2196–glycine 2200. Positions isoleucine 2201–alanine 2221 form an intramembrane region, helical. A topological domain (lumenal) is located at residue glutamate 2222. The helical transmembrane segment at valine 2223–isoleucine 2243 threads the bilayer. At proline 2244–alanine 2258 the chain is on the cytoplasmic side. Residues valine 2259–alanine 2273 form a helical membrane-spanning segment. The Lumenal portion of the chain corresponds to asparagine 2274 to alanine 2312. The segment at residues threonine 2313–isoleucine 2333 is an intramembrane region (helical). Residues threonine 2334–threonine 2380 lie on the Lumenal side of the membrane. Residues leucine 2381–glycine 2401 form a helical membrane-spanning segment. At tryptophan 2402–lysine 2444 the chain is on the cytoplasmic side. A helical membrane pass occupies residues lysine 2445–valine 2465. The Lumenal portion of the chain corresponds to lysine 2466–glutamate 2470. Residues alanine 2471 to tryptophan 2491 traverse the membrane as a helical segment. Topologically, residues asparagine 2492–leucine 3433 are cytoplasmic. In terms of domain architecture, mRNA cap 0-1 NS5-type MT spans glycine 2529–alanine 2794. An S-adenosyl-L-methionine-binding site is contributed by serine 2584. Serine 2584 bears the Phosphoserine mark. Residue lysine 2589 is the For 2'-O-MTase activity of the active site. Residues glycine 2614, tryptophan 2615, threonine 2632, lysine 2633, aspartate 2659, and valine 2660 each contribute to the S-adenosyl-L-methionine site. Catalysis depends on aspartate 2674, which acts as the For 2'-O-MTase activity. Residue isoleucine 2675 coordinates S-adenosyl-L-methionine. Catalysis depends on for 2'-O-MTase activity residues lysine 2710 and glutamate 2746. Tyrosine 2748 is an S-adenosyl-L-methionine binding site. The Nuclear localization signal signature appears at arginine 2917 to lysine 2919. The Zn(2+) site is built by glutamate 2968, histidine 2972, cysteine 2977, and cysteine 2980. Positions glycine 3058–serine 3210 constitute a RdRp catalytic domain. Zn(2+) contacts are provided by histidine 3245, cysteine 3261, and cysteine 3380. Positions threonine 3431–leucine 3433 match the PDZ-binding motif.

The protein in the N-terminal section; belongs to the class I-like SAM-binding methyltransferase superfamily. mRNA cap 0-1 NS5-type methyltransferase family. In terms of assembly, homodimer; further assembles as a homotetramer. Interacts (via N-terminus) with host EXOC1 (via C-terminus); this interaction results in EXOC1 degradation through the proteasome degradation pathway. Forms heterodimers with envelope protein E in the endoplasmic reticulum and Golgi. As to quaternary structure, homodimer; in the endoplasmic reticulum and Golgi. Interacts with protein prM. Interacts with non-structural protein 1. In terms of assembly, homodimer; Homohexamer when secreted. Interacts with envelope protein E. NS1 interacts with NS4B. Interacts with host complement protein CFH; this interaction leads to the degradation of C3. Interacts (via N-terminus) with serine protease NS3. As to quaternary structure, forms a heterodimer with serine protease NS3. May form homooligomers. In terms of assembly, forms a heterodimer with NS2B. Interacts with non-structural protein 2A (via N-terminus). Interacts with NS4B. Interacts with unphosphorylated RNA-directed RNA polymerase NS5; this interaction stimulates RNA-directed RNA polymerase NS5 guanylyltransferase activity. Interacts with Serine protease/Helicase NS3. Interacts with NS1. As to quaternary structure, homodimer. Interacts with host STAT2; this interaction inhibits the phosphorylation of the latter, and, when all viral proteins are present (polyprotein), targets STAT2 for degradation. Interacts with serine protease NS3. Post-translationally, specific enzymatic cleavages in vivo yield mature proteins. Cleavages in the lumen of endoplasmic reticulum are performed by host signal peptidase, whereas cleavages in the cytoplasmic side are performed by serine protease NS3. Signal cleavage at the 2K-4B site requires a prior NS3 protease-mediated cleavage at the 4A-2K site. In terms of processing, cleaved in post-Golgi vesicles by a host furin, releasing the mature small envelope protein M, and peptide pr. This cleavage is incomplete as up to 30% of viral particles still carry uncleaved prM. N-glycosylated. Post-translationally, N-glycosylated. The excreted form is glycosylated and this is required for efficient secretion of the protein from infected cells. In terms of processing, acetylated by host KAT5. Acetylation modulates NS3 RNA-binding and unwinding activities and plays an important positive role for viral replication. Phosphorylated on serines residues. This phosphorylation may trigger NS5 nuclear localization.

The protein resides in the virion. The protein localises to the host nucleus. It localises to the host cytoplasm. It is found in the host perinuclear region. Its subcellular location is the secreted. The protein resides in the virion membrane. The protein localises to the host endoplasmic reticulum membrane. It carries out the reaction Selective hydrolysis of -Xaa-Xaa-|-Yaa- bonds in which each of the Xaa can be either Arg or Lys and Yaa can be either Ser or Ala.. The catalysed reaction is RNA(n) + a ribonucleoside 5'-triphosphate = RNA(n+1) + diphosphate. The enzyme catalyses a ribonucleoside 5'-triphosphate + H2O = a ribonucleoside 5'-diphosphate + phosphate + H(+). It catalyses the reaction ATP + H2O = ADP + phosphate + H(+). It carries out the reaction a 5'-end (5'-triphosphoguanosine)-ribonucleoside in mRNA + S-adenosyl-L-methionine = a 5'-end (N(7)-methyl 5'-triphosphoguanosine)-ribonucleoside in mRNA + S-adenosyl-L-homocysteine. The catalysed reaction is a 5'-end (N(7)-methyl 5'-triphosphoguanosine)-ribonucleoside in mRNA + S-adenosyl-L-methionine = a 5'-end (N(7)-methyl 5'-triphosphoguanosine)-(2'-O-methyl-ribonucleoside) in mRNA + S-adenosyl-L-homocysteine + H(+). Functionally, plays a role in virus budding by binding to the cell membrane and gathering the viral RNA into a nucleocapsid that forms the core of a mature virus particle. During virus entry, may induce genome penetration into the host cytoplasm after hemifusion induced by the surface proteins. Can migrate to the cell nucleus where it modulates host functions. Overcomes the anti-viral effects of host EXOC1 by sequestering and degrading the latter through the proteasome degradation pathway. Inhibits RNA silencing by interfering with host Dicer. Its function is as follows. Prevents premature fusion activity of envelope proteins in trans-Golgi by binding to envelope protein E at pH6.0. After virion release in extracellular space, gets dissociated from E dimers. In terms of biological role, acts as a chaperone for envelope protein E during intracellular virion assembly by masking and inactivating envelope protein E fusion peptide. prM is the only viral peptide matured by host furin in the trans-Golgi network probably to avoid catastrophic activation of the viral fusion activity in acidic Golgi compartment prior to virion release. prM-E cleavage is inefficient, and many virions are only partially matured. These uncleaved prM would play a role in immune evasion. Functionally, may play a role in virus budding. Exerts cytotoxic effects by activating a mitochondrial apoptotic pathway through M ectodomain. May display a viroporin activity. Binds to host cell surface receptor and mediates fusion between viral and cellular membranes. Envelope protein is synthesized in the endoplasmic reticulum in the form of heterodimer with protein prM. They play a role in virion budding in the ER, and the newly formed immature particle is covered with 60 spikes composed of heterodimer between precursor prM and envelope protein E. The virion is transported to the Golgi apparatus where the low pH causes dissociation of PrM-E heterodimers and formation of E homodimers. prM-E cleavage is inefficient, and many virions are only partially matured. These uncleaved prM would play a role in immune evasion. Its function is as follows. Involved in immune evasion, pathogenesis and viral replication. Once cleaved off the polyprotein, is targeted to three destinations: the viral replication cycle, the plasma membrane and the extracellular compartment. Essential for viral replication. Required for formation of the replication complex and recruitment of other non-structural proteins to the ER-derived membrane structures. Excreted as a hexameric lipoparticle that plays a role against host immune response. Antagonizing the complement function. Binds to the host macrophages and dendritic cells. Inhibits signal transduction originating from Toll-like receptor 3 (TLR3). In terms of biological role, component of the viral RNA replication complex that functions in virion assembly and antagonizes the host alpha/beta interferon antiviral response. Inhibits STAT2 translocation in the nucleus after IFN-alpha treatment. Functionally, required cofactor for the serine protease function of NS3. May have membrane-destabilizing activity and form viroporins. Inhibits STAT2 translocation in the nucleus after IFN-alpha treatment. Displays three enzymatic activities: serine protease, NTPase and RNA helicase. NS3 serine protease, in association with NS2B, performs its autocleavage and cleaves the polyprotein at dibasic sites in the cytoplasm: C-prM, NS2A-NS2B, NS2B-NS3, NS3-NS4A, NS4A-2K and NS4B-NS5. NS3 RNA helicase binds RNA and unwinds dsRNA in the 3' to 5' direction. NS3 supports the separation of RNA daughter and template strands during viral replication. The helicase part is involved in the inhibition of phosphorylation of host STAT1, and thereby inhibition of host type-I IFN signaling. In addition, NS3 assists the initiation of replication by unwinding the RNA secondary structure in the 3' non-translated region (NTR). Inhibits STAT2 translocation in the nucleus after IFN-alpha treatment. Its function is as follows. Regulates the ATPase activity of the NS3 helicase activity. NS4A allows NS3 helicase to conserve energy during unwinding. Induces host ER membrane rearrangements to provide a compartment where viral replication can take part. Inhibits STAT2 translocation in the nucleus after IFN-alpha treatment. In terms of biological role, functions as a signal peptide for NS4B and is required for the interferon antagonism activity of the latter. Functionally, induces the formation of ER-derived membrane vesicles where the viral replication takes place. Inhibits interferon (IFN)-induced host STAT1 phosphorylation and nuclear translocation, thereby preventing the establishment of cellular antiviral state by blocking the IFN-alpha/beta pathway. Inhibits STAT2 translocation in the nucleus after IFN-alpha treatment. Replicates the viral (+) and (-) genome, and performs the capping of genomes in the cytoplasm. NS5 methylates viral RNA cap at guanine N-7 and ribose 2'-O positions. Besides its role in genome replication, also prevents the establishment of cellular antiviral state by blocking the interferon-alpha/beta (IFN-alpha/beta) signaling pathway. Inhibits host JAK1 and TYK2 phosphorylation, thereby preventing activation of JAK-STAT signaling pathway. May transcriptionally regulate host genes involved in antiviral response when localized in the nucleus. This chain is Genome polyprotein, found in Ciconiiformes (storks and others).